Consider the following 161-residue polypeptide: CASP-like protein 1C2 (161 aa).

Residues 1-7 (MAKNTDR) are Cytoplasmic-facing. The helical transmembrane segment at 8-28 (ICFLVLRLLAFGATLSAAIVM) threads the bilayer. Residues 29–53 (ATSHERTTYLSLSIEAKYSHTPAFK) are Extracellular-facing. A helical transmembrane segment spans residues 54–74 (YFVIANAIGSAYSLLLLFLPS). Topologically, residues 75–86 (HGSLWPLVIASD) are cytoplasmic. The chain crosses the membrane as a helical span at residues 87-107 (VVITMFLTSSISAALSIAYVG). The Extracellular segment spans residues 108-131 (KKGNSYAGWLPICDQVPNYCNHVT). Residues 132-152 (GALAAGFIGVVLYMVLLQYSI) traverse the membrane as a helical segment. The Cytoplasmic segment spans residues 153-161 (YTKCCKSSS).

This sequence belongs to the Casparian strip membrane proteins (CASP) family. In terms of assembly, homodimer and heterodimers.

The protein resides in the cell membrane. The chain is CASP-like protein 1C2 from Vitis vinifera (Grape).